Here is a 214-residue protein sequence, read N- to C-terminus: Rac-like GTP-binding protein 3 (214 aa).

A GTP-binding site is contributed by 15 to 22; the sequence is GDGAVGKT. Positions 37-45 match the Effector region motif; the sequence is YIPTVFDNF. GTP is bound by residues 62-66 and 120-123; these read DTAGQ and TKLD.

This sequence belongs to the small GTPase superfamily. Rho family. May be palmitoylated.

It localises to the cytoplasm. The protein localises to the membrane. In terms of biological role, inactive GDP-bound Rho GTPases reside in the cytosol, are found in a complex with Rho GDP-dissociation inhibitors (Rho GDIs), and are released from the GDI protein in order to translocate to membranes upon activation. In Oryza sativa subsp. japonica (Rice), this protein is Rac-like GTP-binding protein 3 (RAC3).